The chain runs to 246 residues: Probable septum site-determining protein MinC (246 aa).

Belongs to the MinC family. As to quaternary structure, interacts with MinD and FtsZ.

Functionally, cell division inhibitor that blocks the formation of polar Z ring septums. Rapidly oscillates between the poles of the cell to destabilize FtsZ filaments that have formed before they mature into polar Z rings. Prevents FtsZ polymerization. The protein is Probable septum site-determining protein MinC of Lachnospira eligens (strain ATCC 27750 / DSM 3376 / VPI C15-48 / C15-B4) (Eubacterium eligens).